A 131-amino-acid polypeptide reads, in one-letter code: uncharacterized protein (131 aa).

It localises to the plastid. The protein resides in the chloroplast. This is an uncharacterized protein from Chlorella vulgaris (Green alga).